The primary structure comprises 427 residues: Homogentisate 1,2-dioxygenase (427 aa).

H285 (proton acceptor) is an active-site residue. H328 and E334 together coordinate Fe cation. Residues Y343 and H364 each contribute to the homogentisate site. H364 lines the Fe cation pocket.

It belongs to the homogentisate dioxygenase family. Hexamer; dimer of trimers. It depends on Fe cation as a cofactor.

The catalysed reaction is homogentisate + O2 = 4-maleylacetoacetate + H(+). It participates in amino-acid degradation; L-phenylalanine degradation; acetoacetate and fumarate from L-phenylalanine: step 4/6. Its function is as follows. Involved in the catabolism of homogentisate (2,5-dihydroxyphenylacetate or 2,5-OH-PhAc), a central intermediate in the degradation of phenylalanine and tyrosine. Catalyzes the oxidative ring cleavage of the aromatic ring of homogentisate to yield maleylacetoacetate. The protein is Homogentisate 1,2-dioxygenase of Caulobacter sp. (strain K31).